A 929-amino-acid polypeptide reads, in one-letter code: Facilitated trehalose transporter Tret1 (929 aa).

Residues 1–275 (MSGRDNRAAG…VGYQQQKATS (275 aa)) form a disordered region. At 1–462 (MSGRDNRAAG…LEVYRPTTNP (462 aa)) the chain is on the cytoplasmic side. Positions 10–26 (GAGGGSGGGGGGGGGGG) are enriched in gly residues. Residues 41 to 59 (KLKEKLTRAGEELGYHRVE) are compositionally biased toward basic and acidic residues. The span at 60–72 (SNLSASNTATSLD) shows a compositional bias: polar residues. Composition is skewed to low complexity over residues 85–141 (AAPQ…QPLR), 168–178 (QEIQQQQLQQQ), and 237–254 (SNSNNNSKNNSKTTVAAD). 3 positions are modified to phosphoserine: serine 320, serine 321, and serine 322. Positions 352-371 (VLHGSSTDSDEEGEDAEHKR) are disordered. Residues serine 392 and serine 394 each carry the phosphoserine modification. Residues 398–420 (FLSSRQNFQQQRSISTDSRKSRR) form a disordered region. Positions 402-413 (RQNFQQQRSIST) are enriched in polar residues. The chain crosses the membrane as a helical span at residues 463–483 (IYIWTQVLAALSVSLGSLVVG). The Extracellular segment spans residues 484–512 (FSSAYTSPALVSMTDRNLTSFDVSTEDAS). N-linked (GlcNAc...) asparagine glycosylation is present at asparagine 500. A helical transmembrane segment spans residues 513-533 (WVGGIMPLAGLAGGIAGGPLI). Residues 534 to 541 (EYLGRRNT) are Cytoplasmic-facing. A helical transmembrane segment spans residues 542–562 (ILATAVPFIISWLLIACAVNV). Residues 563–569 (PMVLSGR) lie on the Extracellular side of the membrane. Residues 570 to 590 (FLAGFCVGIASLSLPVYLGET) form a helical membrane-spanning segment. Residues 591–596 (VQPEVR) are Cytoplasmic-facing. The chain crosses the membrane as a helical span at residues 597-617 (GTLGLLPTAFGNIGILLCFIA). The Extracellular segment spans residues 618–624 (GTYMDWS). A helical membrane pass occupies residues 625 to 645 (MLAFLGGALPVPFLILMFLIP). Residues 646–708 (ETPRWYVSRG…ELLKRSNLKP (63 aa)) lie on the Cytoplasmic side of the membrane. Residues 709–729 (LSISLGLMFFQQLSGINAVIF) form a helical membrane-spanning segment. Over 730–745 (YTVQIFKDAGSTLDGN) the chain is Extracellular. A helical membrane pass occupies residues 746–766 (VCTIIVGTVNFIATFIGILLI). Residues 767-772 (DRAGRK) are Cytoplasmic-facing. A helical membrane pass occupies residues 773-793 (ILLYVSNIAMILTLFVLGGFF). Topologically, residues 794–804 (YCKANGMDVSN) are extracellular. Residues 805–825 (VGLLPLCCFVVYILGFSLGFG) traverse the membrane as a helical segment. The Cytoplasmic portion of the chain corresponds to 826–839 (PIPWLMMGEILPAK). The chain crosses the membrane as a helical span at residues 840 to 860 (IRGSAASVATAFNWTCTFVVT). At 861-873 (KSFLDMIKLIGAH) the chain is on the extracellular side. Residues 874 to 894 (GAFWLFGVICCIGMFFVIFCV) form a helical membrane-spanning segment. Residues 895–929 (PETQGKTLEDIERKMMGRVRRMSSVANIKPLSFNM) are Cytoplasmic-facing. Phosphoserine occurs at positions 917 and 918.

It belongs to the major facilitator superfamily. Sugar transporter (TC 2.A.1.1) family. Trehalose transporter subfamily.

It is found in the cell membrane. Its function is as follows. Low-capacity facilitative transporter for trehalose. Does not transport maltose, sucrose or lactose. Mediates the bidirectional transfer of trehalose. Responsible for the transport of trehalose synthesized in the fat body and the incorporation of trehalose into other tissues that require a carbon source, thereby regulating trehalose levels in the hemolymph. The chain is Facilitated trehalose transporter Tret1 from Drosophila grimshawi (Hawaiian fruit fly).